The chain runs to 123 residues: Methylmalonyl-CoA carboxyltransferase 1.3S subunit (123 aa).

The Biotinyl-binding domain occupies 46 to 123 (GAGAGKAGEG…QGGQGLIKIG (78 aa)). An N6-biotinyllysine modification is found at lysine 89.

As to quaternary structure, transcarboxylase is composed of three subunits: 1.3S, 5S, and 12S. The core of the enzyme is composed of six 12S subunits. On each side of the core there are three pairs of 5S subunits. Each 5S dimer is attached to the core by two 1.3S subunits. Thus the total number of chains is 30 (6 + 12 + 12).

It catalyses the reaction (S)-methylmalonyl-CoA + pyruvate = propanoyl-CoA + oxaloacetate. In terms of biological role, the biotinyl 1.3S subunit serves as a carboxyl carrier between the substrate-binding sites on the 12S and 5S subunits. This chain is Methylmalonyl-CoA carboxyltransferase 1.3S subunit, found in Propionibacterium freudenreichii subsp. shermanii.